The primary structure comprises 251 residues: MLGACLRLLVGALCTVCSLGTARAYSDTSPLLGSNWGSLTHLYTATARNSYHLQIHRDGHVDGTPHQTIYSALMITSEDAGSVVIIGAMTRRFLCMDLRGNIFGSYHFSPENCRFRQWTLENGYDVYLSPKHHYLVSLGRSKRIFQPGTNPPPFSQFLARRNEVPLLHFYTARPRRHTRSAEDPPERDPLNVLKPRPRATPIPVSCSRELPSAEEGGPAASDPLGVLRRGRGDARRGAGGTDRCRPFPRFV.

Residues 1–24 form the signal peptide; sequence MLGACLRLLVGALCTVCSLGTARA. C95 and C113 are oxidised to a cystine. O-linked (GalNAc) threonine glycosylation is found at T171 and T178. A disordered region spans residues 175–251; the sequence is RRHTRSAEDP…DRCRPFPRFV (77 aa). The span at 179–189 shows a compositional bias: basic and acidic residues; the sequence is RSAEDPPERDP. S180 carries the phosphoserine; by FAM20C modification.

Belongs to the heparin-binding growth factors family. As to quaternary structure, interacts with FGFR1, FGFR2, FGFR3 and FGFR4. Affinity between fibroblast growth factors (FGFs) and their receptors is increased by KL and heparan sulfate glycosaminoglycans that function as coreceptors. In terms of processing, following secretion this protein is inactivated by cleavage into a N-terminal fragment and a C-terminal fragment. The processing is effected by proprotein convertases. O-glycosylated at Thr-171 and Thr-178 by GALNT3 and glycosylation of Thr-178 requires previous glycosylation at Thr171. Glycosylation is necessary for secretion; it blocks processing by proprotein convertases when the O-glycan is alpha 2,6-sialylated. Competition between proprotein convertase cleavage and block of cleavage by O-glycosylation determines the level of secreted active FGF23. Post-translationally, phosphorylation at Ser-180 mediated by FAM20C slows down glycosylation at Thr-178 notably. As to expression, expressed in the parathyroid.

The protein localises to the secreted. Functionally, regulator of phosphate homeostasis. Inhibits renal tubular phosphate transport by reducing SLC34A1 levels. Regulator of vitamin-D metabolism. Negatively regulates osteoblasts differentiation and matrix mineralization. Acts directly on the parathyroid to decrease PTH secretion. Up-regulates EGR1 expression in the presence of KL. This is Fibroblast growth factor 23 (Fgf23) from Rattus norvegicus (Rat).